Here is a 162-residue protein sequence, read N- to C-terminus: ATP synthase subunit b (162 aa).

Residues Leu-8 to Leu-28 traverse the membrane as a helical segment.

The protein belongs to the ATPase B chain family. F-type ATPases have 2 components, F(1) - the catalytic core - and F(0) - the membrane proton channel. F(1) has five subunits: alpha(3), beta(3), gamma(1), delta(1), epsilon(1). F(0) has three main subunits: a(1), b(2) and c(10-14). The alpha and beta chains form an alternating ring which encloses part of the gamma chain. F(1) is attached to F(0) by a central stalk formed by the gamma and epsilon chains, while a peripheral stalk is formed by the delta and b chains.

It localises to the cell inner membrane. Functionally, f(1)F(0) ATP synthase produces ATP from ADP in the presence of a proton or sodium gradient. F-type ATPases consist of two structural domains, F(1) containing the extramembraneous catalytic core and F(0) containing the membrane proton channel, linked together by a central stalk and a peripheral stalk. During catalysis, ATP synthesis in the catalytic domain of F(1) is coupled via a rotary mechanism of the central stalk subunits to proton translocation. Its function is as follows. Component of the F(0) channel, it forms part of the peripheral stalk, linking F(1) to F(0). The chain is ATP synthase subunit b from Pseudothermotoga lettingae (strain ATCC BAA-301 / DSM 14385 / NBRC 107922 / TMO) (Thermotoga lettingae).